The primary structure comprises 220 residues: 5-hmdU DNA kinase 1 (220 aa).

The protein belongs to the thymidylate kinase family. 5-hmdU DNA kinase subfamily.

The enzyme catalyses 5-hydroxymethyl-dUMP in DNA + ATP = 5-phosphomethyl-dUMP in DNA + ADP + H(+). Functionally, phosphorylates 5-hydroxymethyluracil (5hmdU) into 5-phosphomethyl-2'-deoxyuridine (5- PmdU) on DNA as a step in the pathway leading to thymidine hypermodifications in the viral genome. The phosphate is added internally to the DNA polymer. As a final result of the pathway of hypermodification, 5-aminoethoxy-2'-deoxymethyluridine (5-NeOmdU) substitutes for about 40% of the thymidines in the viral DNA. These modifications probably prevent degradation of viral genome by the host restriction-modification antiviral defense system. In Salmonella phage ViI, this protein is 5-hmdU DNA kinase 1.